A 34-amino-acid chain; its full sequence is SCNLSTCATHNLVNELNKFDKSKPSSGGVGPESF.

An intrachain disulfide couples cysteine 2 to cysteine 7. At phenylalanine 34 the chain carries Phenylalanine amide.

The protein is Calcitonin-like peptide 2 of Odorrana schmackeri (Schmacker's frog).